Consider the following 152-residue polypeptide: Large ribosomal subunit protein uL15 (152 aa).

The segment at 1–57 (MTSTLNTLKSNSGSRKKKLRKGRGIAAGQGASCGFGMRGQKSRSGRPTRPGFEGGQM) is disordered. Over residues 14–23 (SRKKKLRKGR) the composition is skewed to basic residues. Positions 25 to 37 (IAAGQGASCGFGM) are enriched in gly residues.

This sequence belongs to the universal ribosomal protein uL15 family. As to quaternary structure, part of the 50S ribosomal subunit.

Its function is as follows. Binds to the 23S rRNA. This is Large ribosomal subunit protein uL15 from Prochlorococcus marinus (strain MIT 9215).